Reading from the N-terminus, the 202-residue chain is Twist-related protein 1 (202 aa).

The span at 1 to 18 (MMQDVSSSPVSPADDSLS) shows a compositional bias: low complexity. The interval 1-105 (MMQDVSSSPV…GGGSPQSYEE (105 aa)) is disordered. Positions 34–43 (RGGRKRRSSR) are enriched in basic residues. Composition is skewed to gly residues over residues 46-65 (AGGG…GGDE) and 80-99 (GCGG…GGGS). The bHLH domain maps to 108-159 (TQRVMANVRERQRTQSLNEAFAALRKIIPTLPSDKLSKIQTLKLAARYIDFL). The segment at 161 to 191 (QVLQSDELDSKMASCSYVAHERLSYAFSVWR) is sufficient for transactivation activity.

As to quaternary structure, efficient DNA binding requires dimerization with another bHLH protein. Homodimer or heterodimer with E proteins such as TCF3. ID1 binds preferentially to TCF3 but does not interact efficiently with TWIST1 so ID1 levels control the amount of TCF3 available to dimerize with TWIST1 and thus determine the type of dimer formed. As to expression, subset of mesodermal cells.

The protein localises to the nucleus. Acts as a transcriptional regulator. Inhibits myogenesis by sequestrating E proteins, inhibiting trans-activation by MEF2, and inhibiting DNA-binding by MYOD1 through physical interaction. This interaction probably involves the basic domains of both proteins. Also represses expression of pro-inflammatory cytokines such as TNFA and IL1B. Regulates cranial suture patterning and fusion. Activates transcription as a heterodimer with E proteins. Regulates gene expression differentially, depending on dimer composition. Homodimers induce expression of FGFR2 and POSTN while heterodimers repress FGFR2 and POSTN expression and induce THBS1 expression. Heterodimerization is also required for osteoblast differentiation. Represses the activity of the circadian transcriptional activator: NPAS2-BMAL1 heterodimer. The protein is Twist-related protein 1 (TWIST1) of Homo sapiens (Human).